The primary structure comprises 257 residues: Short chain dehydrogenase prhI (257 aa).

A helical transmembrane segment spans residues His7 to Ser29. Position 11 (Ile11) interacts with NADP(+). Asn50 carries an N-linked (GlcNAc...) asparagine glycan. Asp57 is an NADP(+) binding site. Asn92 and Asn110 each carry an N-linked (GlcNAc...) asparagine glycan. NADP(+)-binding residues include Arg119, Tyr151, Lys155, and Val184. Tyr151 (proton acceptor) is an active-site residue. The Lowers pKa of active site Tyr role is filled by Lys155.

The protein belongs to the short-chain dehydrogenases/reductases (SDR) family.

The protein resides in the membrane. The catalysed reaction is protoaustinoid A + A = protoaustinoid B + AH2. It participates in secondary metabolite biosynthesis; terpenoid biosynthesis. In terms of biological role, short chain dehydrogenase; part of the gene cluster that mediates the biosynthesis of paraherquonin, a meroterpenoid with a unique, highly congested hexacyclic molecular architecture. The first step of the pathway is the synthesis of 3,5-dimethylorsellinic acid (DMOA) by the polyketide synthase prhL. Synthesis of DMOA is followed by farnesylation by the prenyltransferase prhE, methylesterification by the methyl-transferase prhM, epoxidation of the prenyl chain by the flavin-dependent monooxygenase prhF, and cyclization of the farnesyl moiety by the terpene cyclase prhH, to yield the tetracyclic intermediate, protoaustinoid A. The short chain dehydrogenase prhI then oxidizes the C-3 alcohol group of the terpene cyclase product to transform protoaustinoid A into protoaustinoid B. The FAD-binding monooxygenase prhJ catalyzes the oxidation of protoaustinoid B into preaustinoid A which is further oxidized into preaustinoid A1 by FAD-binding monooxygenase phrK. Finally, prhA leads to berkeleydione via the berkeleyone B intermediate. PrhA is a multifunctional dioxygenase that first desaturates at C5-C6 to form berkeleyone B, followed by rearrangement of the A/B-ring to form the cycloheptadiene moiety in berkeleydione. Berkeleydione serves as the key intermediate for the biosynthesis of paraherquonin as well as many other meroterpenoids. The cytochrome P450 monooxygenases prhB, prhD, and prhN, as well as the isomerase prhC, are probably involved in the late stage of paraherquonin biosynthesis, after the production of berkeleydione. Especially prhC might be a multifunctional enzyme that catalyzes the D-ring expansion via intramolecular methoxy rearrangement, as well as the hydrolysis of the expanded D-ring. In Penicillium brasilianum, this protein is Short chain dehydrogenase prhI.